Here is a 203-residue protein sequence, read N- to C-terminus: Bone marrow stromal antigen 2 (203 aa).

At Met1–Cys26 the chain is on the cytoplasmic side. Residues Leu27–Val47 form a helical; Signal-anchor for type II membrane protein membrane-spanning segment. Over Lys48 to Ser183 the chain is Extracellular. N-linked (GlcNAc...) asparagine glycans are attached at residues Asn66 and Asn93. A coiled-coil region spans residues Asn66–Thr178. Ser183 carries GPI-anchor amidated serine lipidation. The propeptide at Ala184–Phe203 is removed in mature form.

Parallel homodimer; disulfide-linked. May form homotetramers under reducing conditions. Isoform 1 and isoform 2 form homodimers and also heterodimers with each other. Dimerization is essential for its antiviral activity. Interacts (via cytoplasmic domain) with ARHGAP44. Interacts with MMP14 (via C-terminal cytoplasmic tail). Interacts with LILRA4/ILT7. Interacts with RNF115. The GPI anchor is essential for its antiviral activity.

Its subcellular location is the golgi apparatus. The protein localises to the trans-Golgi network. It localises to the cell membrane. The protein resides in the late endosome. It is found in the membrane raft. Its subcellular location is the cytoplasm. The protein localises to the apical cell membrane. IFN-induced antiviral host restriction factor which efficiently blocks the release of diverse mammalian enveloped viruses by directly tethering nascent virions to the membranes of infected cells. Acts as a direct physical tether, holding virions to the cell membrane and linking virions to each other. The tethered virions can be internalized by endocytosis and subsequently degraded or they can remain on the cell surface. In either case, their spread as cell-free virions is restricted. Its target viruses belong to diverse families, including retroviridae: human immunodeficiency virus type 1 (HIV-1), mouse mammary tumor virus (MMTV) and murine leukemia virus (MLV), filoviridae: ebola virus (EBOV), arenaviridae: lassa virus (LASV), and rhabdoviridae: vesicular stomatitis virus (VSV). Can inhibit cell surface proteolytic activity of MMP14 causing decreased activation of MMP15 which results in inhibition of cell growth and migration. Can stimulate signaling by LILRA4/ILT7 and consequently provide negative feedback to the production of IFN by plasmacytoid dendritic cells in response to viral infection. Plays a role in the organization of the subapical actin cytoskeleton in polarized epithelial cells. The polypeptide is Bone marrow stromal antigen 2 (Bst2) (Cricetulus griseus (Chinese hamster)).